A 270-amino-acid polypeptide reads, in one-letter code: Dehydrodolichyl diphosphate synthase (270 aa).

This sequence belongs to the UPP synthase family.

It is found in the endoplasmic reticulum membrane. Its pathway is protein modification; protein glycosylation. Its function is as follows. Cis-prenyl transferase that adds multiple copies of isopentenyl pyrophosphate (IPP) to farnesyl pyrophosphate (FPP) to produce dehydrodolichyl diphosphate (Dedol-PP). In Encephalitozoon cuniculi (strain GB-M1) (Microsporidian parasite), this protein is Dehydrodolichyl diphosphate synthase (RER2).